Here is a 403-residue protein sequence, read N- to C-terminus: Argininosuccinate synthase (403 aa).

10–18 serves as a coordination point for ATP; sequence AYSGGLDTS. Residue Tyr-87 coordinates L-citrulline. Gly-117 contributes to the ATP binding site. Residues Thr-119, Asn-123, and Asp-124 each contribute to the L-aspartate site. An L-citrulline-binding site is contributed by Asn-123. The L-citrulline site is built by Arg-127, Ser-175, Ser-184, Glu-260, and Tyr-272.

The protein belongs to the argininosuccinate synthase family. Type 1 subfamily. Homotetramer.

It localises to the cytoplasm. The enzyme catalyses L-citrulline + L-aspartate + ATP = 2-(N(omega)-L-arginino)succinate + AMP + diphosphate + H(+). Its pathway is amino-acid biosynthesis; L-arginine biosynthesis; L-arginine from L-ornithine and carbamoyl phosphate: step 2/3. The protein is Argininosuccinate synthase of Bacillus licheniformis (strain ATCC 14580 / DSM 13 / JCM 2505 / CCUG 7422 / NBRC 12200 / NCIMB 9375 / NCTC 10341 / NRRL NRS-1264 / Gibson 46).